Reading from the N-terminus, the 188-residue chain is Pyridoxal 5'-phosphate synthase subunit PdxT (188 aa).

47-49 (GES) contributes to the L-glutamine binding site. Cys79 acts as the Nucleophile in catalysis. L-glutamine is bound by residues Arg105 and 134 to 135 (IR). Residues His170 and Glu172 each act as charge relay system in the active site.

Belongs to the glutaminase PdxT/SNO family. As to quaternary structure, in the presence of PdxS, forms a dodecamer of heterodimers. Only shows activity in the heterodimer.

The enzyme catalyses aldehydo-D-ribose 5-phosphate + D-glyceraldehyde 3-phosphate + L-glutamine = pyridoxal 5'-phosphate + L-glutamate + phosphate + 3 H2O + H(+). The catalysed reaction is L-glutamine + H2O = L-glutamate + NH4(+). It functions in the pathway cofactor biosynthesis; pyridoxal 5'-phosphate biosynthesis. Catalyzes the hydrolysis of glutamine to glutamate and ammonia as part of the biosynthesis of pyridoxal 5'-phosphate. The resulting ammonia molecule is channeled to the active site of PdxS. This Listeria innocua serovar 6a (strain ATCC BAA-680 / CLIP 11262) protein is Pyridoxal 5'-phosphate synthase subunit PdxT.